Reading from the N-terminus, the 176-residue chain is Ubiquitin-conjugating enzyme E2-20 kDa (176 aa).

Positions 1-20 (MDSDMQNQNPHTNSKNSSSA) are enriched in polar residues. The tract at residues 1 to 25 (MDSDMQNQNPHTNSKNSSSAGMAVD) is disordered. In terms of domain architecture, UBC core spans 28 to 175 (SVTKRLRSEL…LMQRYKEIDE (148 aa)). Residue Cys113 is the Glycyl thioester intermediate of the active site.

The protein belongs to the ubiquitin-conjugating enzyme family.

The catalysed reaction is S-ubiquitinyl-[E1 ubiquitin-activating enzyme]-L-cysteine + [E2 ubiquitin-conjugating enzyme]-L-cysteine = [E1 ubiquitin-activating enzyme]-L-cysteine + S-ubiquitinyl-[E2 ubiquitin-conjugating enzyme]-L-cysteine.. It functions in the pathway protein modification; protein ubiquitination. Functionally, catalyzes the covalent attachment of ubiquitin to other proteins. The sequence is that of Ubiquitin-conjugating enzyme E2-20 kDa (ubc11) from Schizosaccharomyces pombe (strain 972 / ATCC 24843) (Fission yeast).